The sequence spans 303 residues: Cytosolic-abundant heat soluble protein 3 (303 aa).

Positions 1–19 (MSSRQNQQSSSQHSSSSQQ) are enriched in low complexity. The disordered stretch occupies residues 1–67 (MSSRQNQQSS…PGSHSEVHEE (67 aa)). Residues 170-257 (ARQDEQDAGM…ESAKAQTNVN (88 aa)) are a coiled coil. CAHS motif regions lie at residues 184 to 202 (YREE…LERQ) and 221 to 239 (QERE…LELE). Over residues 270–280 (KGAIQTSADKS) the composition is skewed to polar residues. The segment at 270–303 (KGAIQTSADKSSTTKTGPTTVTQIKHTEQHTERR) is disordered. Low complexity predominate over residues 282–291 (TTKTGPTTVT). Over residues 294–303 (KHTEQHTERR) the composition is skewed to basic and acidic residues.

Belongs to the Cytosolic-abundant heat soluble protein (CAHS) family.

It localises to the cytoplasm. Functionally, CAHS proteins are cytosolic heat soluble proteins that seem to contribute to the anhydrobiosis in tardigrades, but their specific mechanisms are yet to be identified. It is possible that protection during anhydrobiosis might occur via the stabilization of vitrifying small molecules such as sugars, but not via the direct glass transition of CAHS proteins themselves. This chain is Cytosolic-abundant heat soluble protein 3, found in Ramazzottius varieornatus (Water bear).